The primary structure comprises 345 residues: UDP-3-O-acylglucosamine N-acyltransferase (345 aa).

The Proton acceptor role is filled by H241.

It belongs to the transferase hexapeptide repeat family. LpxD subfamily. As to quaternary structure, homotrimer.

It catalyses the reaction a UDP-3-O-[(3R)-3-hydroxyacyl]-alpha-D-glucosamine + a (3R)-hydroxyacyl-[ACP] = a UDP-2-N,3-O-bis[(3R)-3-hydroxyacyl]-alpha-D-glucosamine + holo-[ACP] + H(+). It participates in bacterial outer membrane biogenesis; LPS lipid A biosynthesis. In terms of biological role, catalyzes the N-acylation of UDP-3-O-acylglucosamine using 3-hydroxyacyl-ACP as the acyl donor. Is involved in the biosynthesis of lipid A, a phosphorylated glycolipid that anchors the lipopolysaccharide to the outer membrane of the cell. The sequence is that of UDP-3-O-acylglucosamine N-acyltransferase from Desulfotalea psychrophila (strain LSv54 / DSM 12343).